The following is a 227-amino-acid chain: Ribonuclease 3 (227 aa).

The region spanning 6-128 (ASDYQQRIGY…VIAAIYLDAD (123 aa)) is the RNase III domain. Position 41 (Glu-41) interacts with Mg(2+). Asp-45 is a catalytic residue. Residues Asp-114 and Glu-117 each coordinate Mg(2+). Glu-117 is a catalytic residue. The 71-residue stretch at 155–225 (DPKTRLQEWL…ASHAINQLDS (71 aa)) folds into the DRBM domain. Over residues 203-212 (GEGSSRRLAE) the composition is skewed to basic and acidic residues. A disordered region spans residues 203–227 (GEGSSRRLAEQDAASHAINQLDSNK).

This sequence belongs to the ribonuclease III family. Homodimer. Mg(2+) serves as cofactor.

Its subcellular location is the cytoplasm. It catalyses the reaction Endonucleolytic cleavage to 5'-phosphomonoester.. In terms of biological role, digests double-stranded RNA. Involved in the processing of primary rRNA transcript to yield the immediate precursors to the large and small rRNAs (23S and 16S). Processes some mRNAs, and tRNAs when they are encoded in the rRNA operon. Processes pre-crRNA and tracrRNA of type II CRISPR loci if present in the organism. The protein is Ribonuclease 3 of Xylella fastidiosa (strain M12).